Consider the following 250-residue polypeptide: Aquaporin TIP2-3 (250 aa).

Met1 is modified (N-acetylmethionine). The Cytoplasmic segment spans residues 1-24 (MVKIEVGSVGDSFSVSSLKAYLSE). Position 3 is an N6,N6-dimethyllysine (Lys3). Residues 25-45 (FIATLLFVFAGVGSAVAFAKL) form a helical membrane-spanning segment. The Vacuolar segment spans residues 46 to 54 (TSDGALDPA). A helical membrane pass occupies residues 55–75 (GLVAIAIAHAFALFVGVSIAA). Topologically, residues 76–101 (NISGGHLNPAVTLGLAIGGNITLITG) are cytoplasmic. The NPA 1 signature appears at 83–85 (NPA). The helical transmembrane segment at 102–122 (FFYWIAQCLGSIVACLLLVFV) threads the bilayer. The Vacuolar segment spans residues 123-134 (TNGKSVPTHGVS). Residues 135 to 155 (AGLGAVEGVVMEIVVTFALVY) traverse the membrane as a helical segment. The Cytoplasmic portion of the chain corresponds to 156–168 (TVYATAADPKKGS). A helical transmembrane segment spans residues 169–189 (LGTIAPIAIGFIVGANILAAG). Residues 190 to 217 (PFSGGSMNPARSFGPAVVSGDLSQIWIY) lie on the Vacuolar side of the membrane. Residues 197–199 (NPA) carry the NPA 2 motif. The chain crosses the membrane as a helical span at residues 218-238 (WVGPLVGGALAGLIYGDVFIG). The Cytoplasmic portion of the chain corresponds to 239–250 (SYEAVETREIRV).

Belongs to the MIP/aquaporin (TC 1.A.8) family. TIP (TC 1.A.8.10) subfamily. As to quaternary structure, interacts with cucumber mosaic virus (CMV) Protein 1a. As to expression, widely expressed.

It localises to the vacuole membrane. Transports methylammonium or ammonium in yeast cells, preferentially at high medium pH. May participate in vacuolar compartmentation and detoxification of ammonium. In Arabidopsis thaliana (Mouse-ear cress), this protein is Aquaporin TIP2-3 (TIP2-3).